A 367-amino-acid polypeptide reads, in one-letter code: Quinolinate synthase (367 aa).

Positions 45 and 62 each coordinate iminosuccinate. A [4Fe-4S] cluster-binding site is contributed by C109. Iminosuccinate is bound by residues Y140–N142 and S161. Position 229 (C229) interacts with [4Fe-4S] cluster. Iminosuccinate is bound by residues H255–E257 and T272. C319 serves as a coordination point for [4Fe-4S] cluster.

Belongs to the quinolinate synthase family. Type 3 subfamily. It depends on [4Fe-4S] cluster as a cofactor.

It localises to the cytoplasm. It carries out the reaction iminosuccinate + dihydroxyacetone phosphate = quinolinate + phosphate + 2 H2O + H(+). The protein operates within cofactor biosynthesis; NAD(+) biosynthesis; quinolinate from iminoaspartate: step 1/1. Its function is as follows. Catalyzes the condensation of iminoaspartate with dihydroxyacetone phosphate to form quinolinate. The polypeptide is Quinolinate synthase (Geobacillus thermodenitrificans (strain NG80-2)).